The sequence spans 675 residues: MAAAKVALTKRADPAELRTIFLKYASIEKNGEFFMSPNDFVTRYLNIFGESQPNPKTVELLSGVVDQTKDGLISFQEFVAFESVLCAPDALFMVAFQLFDKAGKGEVTFEDVKQVFGQTTIHQHIPFNWDSEFVQLHFGKERKRHLTYAEFTQFLLEIQLEHAKQAFVQRDNARTGRVTAIDFRDIMVTIRPHVLTPFVEECLVAAAGGTTSHQVSFSYFNGFNSLLNNMELIRKIYSTLAGTRKDVEVTKEEFVLAAQKFGQVTPMEVDILFQLADLYEPRGRMTLADIERIAPLEEGTLPFNLAEAQRQKASGDSARPVLLQVAESAYRFGLGSVAGAVGATAVYPIDLVKTRMQNQRSTGSFVGELMYKNSFDCFKKVLRYEGFFGLYRGLLPQLLGVAPEKAIKLTVNDFVRDKFMHKDGSVPLAAEILAGGCAGGSQVIFTNPLEIVKIRLQVAGEITTGPRVSALSVVRDLGFFGIYKGAKACFLRDIPFSAIYFPCYAHVKASFANEDGQVSPGSLLLAGAIAGMPAASLVTPADVIKTRLQVAARAGQTTYSGVIDCFRKILREEGPKALWKGAGARVFRSSPQFGVTLLTYELLQRWFYIDFGGVKPMGSEPVPKSRINLPAPNPDHVGGYKLAVATFAGIENKFGLYLPLFKPSVSTSKAIGGGP.

Residue Ala-2 is modified to N-acetylalanine. Residues 2 to 295 (AAAKVALTKR…TLADIERIAP (294 aa)) are regulatory N-terminal domain. Topologically, residues 2–331 (AAAKVALTKR…LLQVAESAYR (330 aa)) are mitochondrial intermembrane. EF-hand domains lie at 51 to 86 (SQPN…SVLC), 87 to 122 (APDA…TTIH), 125 to 157 (IPFN…FLLE), and 158 to 193 (IQLE…IRPH). Residues Asp-66, Thr-68, Asp-70, Leu-72, and Glu-77 each contribute to the Ca(2+) site. A linker loop domain region spans residues 296 to 311 (LEEGTLPFNLAEAQRQ). The segment at 321 to 612 (VLLQVAESAY…LQRWFYIDFG (292 aa)) is carrier domain. Solcar repeat units lie at residues 326–418 (AESA…VRDK), 426–510 (VPLA…VKAS), and 518–606 (VSPG…LQRW). The helical transmembrane segment at 332–349 (FGLGSVAGAVGATAVYPI) threads the bilayer. Over 350 to 392 (DLVKTRMQNQRSTGSFVGELMYKNSFDCFKKVLRYEGFFGLYR) the chain is Mitochondrial matrix. Residues Lys-353 and Lys-372 each carry the N6-acetyllysine modification. The helical transmembrane segment at 393 to 412 (GLLPQLLGVAPEKAIKLTVN) threads the bilayer. Topologically, residues 413–435 (DFVRDKFMHKDGSVPLAAEILAG) are mitochondrial intermembrane. The helical transmembrane segment at 436 to 449 (GCAGGSQVIFTNPL) threads the bilayer. Over 450-484 (EIVKIRLQVAGEITTGPRVSALSVVRDLGFFGIYK) the chain is Mitochondrial matrix. Lys-453 is subject to N6-methyllysine. At Lys-484 the chain carries N6-acetyllysine; alternate. Lys-484 carries the post-translational modification N6-succinyllysine; alternate. The chain crosses the membrane as a helical span at residues 485–504 (GAKACFLRDIPFSAIYFPCY). Residues 505–523 (AHVKASFANEDGQVSPGSL) are Mitochondrial intermembrane-facing. The chain crosses the membrane as a helical span at residues 524–541 (LLAGAIAGMPAASLVTPA). The Mitochondrial matrix segment spans residues 542-580 (DVIKTRLQVAARAGQTTYSGVIDCFRKILREEGPKALWK). Lys-580 carries the N6-succinyllysine modification. A helical membrane pass occupies residues 581-600 (GAGARVFRSSPQFGVTLLTY). At 601 to 675 (ELLQRWFYID…STSKAIGGGP (75 aa)) the chain is on the mitochondrial intermembrane side. Positions 613–675 (GVKPMGSEPV…STSKAIGGGP (63 aa)) are C-terminal domain. Lys-662 is modified (N6-acetyllysine). Ser-666 is modified (phosphoserine).

Belongs to the mitochondrial carrier (TC 2.A.29) family. In terms of assembly, homodimer (via N-terminus). In terms of tissue distribution, high levels in liver and low levels in kidney, pancreas, placenta, heart and brain.

The protein resides in the mitochondrion inner membrane. The enzyme catalyses L-aspartate(in) + L-glutamate(out) + H(+)(out) = L-aspartate(out) + L-glutamate(in) + H(+)(in). It catalyses the reaction 3-sulfino-L-alanine(out) + L-glutamate(in) + H(+)(in) = 3-sulfino-L-alanine(in) + L-glutamate(out) + H(+)(out). It carries out the reaction 3-sulfino-L-alanine(out) + L-aspartate(in) = 3-sulfino-L-alanine(in) + L-aspartate(out). With respect to regulation, activated by calcium-binding in the mitochondrial intermembrane space. Inhibited by pyridoxal 5'-phosphate, bathophenathroline, mercurials, diethyl pyrocarbonate and N-ethylmaleimide. Mitochondrial electrogenic aspartate/glutamate antiporter that favors efflux of aspartate and entry of glutamate and proton within the mitochondria as part of the malate-aspartate shuttle. Also mediates the uptake of L-cysteinesulfinate (3-sulfino-L-alanine) by mitochondria in exchange of L-glutamate and proton. Can also exchange L-cysteinesulfinate with aspartate in their anionic form without any proton translocation. Lacks transport activity towards gamma-aminobutyric acid (GABA). In Homo sapiens (Human), this protein is Electrogenic aspartate/glutamate antiporter SLC25A13, mitochondrial.